The sequence spans 428 residues: MPAIVLLGAQWGDEGKGKATDLLAERIDYCVRFNGGNNAGHTIVIDGETYAMHLLPSGVLTPGVVPVIGNGVVIDLGVLFDEIDLLTARGIDTSRLVVSANAHVITAYHRVIDKVTERFLGKARIGTTGRGIGPAYADKMSRVGVRVQDLFDEKILRQKIEGALDQKNQLLVKVYNRRAIDPTAVADELLGYADRLRPMVADTAALLNDALDHHKTVLLEAGQGTLLDVDHGTYPFVTSSNATAGGACTGSGIGPTRIDRVIAVAKAYTTRVGSGPFPTELHDGEGEKLRRIGAEFGVTTGRPRRCGWYDAVAVRYAMRINGVTDVVLTKLDVLSHFERIPVCVAYRLPDGRTVEEMPMTQTELHHVEPVYEELPGWQEDLSAARSLEDLPKNAQRYVEFLQELAGVPFSVIGVGPGRDQTIQLKALV.

GTP is bound by residues glycine 12–lysine 18 and glycine 40–threonine 42. Catalysis depends on aspartate 13, which acts as the Proton acceptor. 2 residues coordinate Mg(2+): aspartate 13 and glycine 40. Residues aspartate 13 to lysine 16, asparagine 38 to histidine 41, threonine 128, arginine 142, glutamine 223, threonine 238, and arginine 302 contribute to the IMP site. Histidine 41 serves as the catalytic Proton donor. Valine 298 to arginine 304 provides a ligand contact to substrate. GTP is bound by residues arginine 304, lysine 330–aspartate 332, and glycine 413–glycine 415.

It belongs to the adenylosuccinate synthetase family. Homodimer. Requires Mg(2+) as cofactor.

It localises to the cytoplasm. The catalysed reaction is IMP + L-aspartate + GTP = N(6)-(1,2-dicarboxyethyl)-AMP + GDP + phosphate + 2 H(+). Its pathway is purine metabolism; AMP biosynthesis via de novo pathway; AMP from IMP: step 1/2. In terms of biological role, plays an important role in the de novo pathway of purine nucleotide biosynthesis. Catalyzes the first committed step in the biosynthesis of AMP from IMP. This is Adenylosuccinate synthetase from Acidothermus cellulolyticus (strain ATCC 43068 / DSM 8971 / 11B).